The sequence spans 153 residues: Hydrogenase expression/formation protein HoxT (153 aa).

This sequence belongs to the HupJ family.

This chain is Hydrogenase expression/formation protein HoxT (hoxT), found in Azotobacter vinelandii.